Consider the following 248-residue polypeptide: DnaA regulatory inactivator Hda (248 aa).

It belongs to the DnaA family. HdA subfamily. As to quaternary structure, the active form seems to be an ADP-bound monomer. Forms the RIDA complex (regulatory inactivation of DnaA) of ATP-DnaA, ADP-Hda and the DNA-loaded beta sliding clamp (dnaN).

In terms of biological role, mediates the interaction of DNA replication initiator protein DnaA with DNA polymerase subunit beta sliding clamp (dnaN). Stimulates hydrolysis of ATP-DnaA to ADP-DnaA, rendering DnaA inactive for reinitiation, a process called regulatory inhibition of DnaA or RIDA. In Proteus mirabilis (strain HI4320), this protein is DnaA regulatory inactivator Hda.